Consider the following 326-residue polypeptide: DNA-directed RNA polymerase subunit alpha (326 aa).

Residues 1 to 231 (MQTNLLKPKI…DQLVVFAALE (231 aa)) are alpha N-terminal domain (alpha-NTD). The interval 247–326 (VDPMLMRPVD…ESWPPANLEK (80 aa)) is alpha C-terminal domain (alpha-CTD).

The protein belongs to the RNA polymerase alpha chain family. In terms of assembly, homodimer. The RNAP catalytic core consists of 2 alpha, 1 beta, 1 beta' and 1 omega subunit. When a sigma factor is associated with the core the holoenzyme is formed, which can initiate transcription.

The catalysed reaction is RNA(n) + a ribonucleoside 5'-triphosphate = RNA(n+1) + diphosphate. In terms of biological role, DNA-dependent RNA polymerase catalyzes the transcription of DNA into RNA using the four ribonucleoside triphosphates as substrates. This is DNA-directed RNA polymerase subunit alpha from Polynucleobacter asymbioticus (strain DSM 18221 / CIP 109841 / QLW-P1DMWA-1) (Polynucleobacter necessarius subsp. asymbioticus).